The sequence spans 250 residues: tRNA (guanine-N(1)-)-methyltransferase (250 aa).

Residues Gly-114 and Ile-134 to Leu-139 contribute to the S-adenosyl-L-methionine site.

This sequence belongs to the RNA methyltransferase TrmD family. Homodimer.

The protein resides in the cytoplasm. It carries out the reaction guanosine(37) in tRNA + S-adenosyl-L-methionine = N(1)-methylguanosine(37) in tRNA + S-adenosyl-L-homocysteine + H(+). In terms of biological role, specifically methylates guanosine-37 in various tRNAs. The protein is tRNA (guanine-N(1)-)-methyltransferase of Moorella thermoacetica (strain ATCC 39073 / JCM 9320).